A 355-amino-acid polypeptide reads, in one-letter code: Phosphoribosylformylglycinamidine cyclo-ligase (355 aa).

This sequence belongs to the AIR synthase family.

The protein resides in the cytoplasm. It carries out the reaction 2-formamido-N(1)-(5-O-phospho-beta-D-ribosyl)acetamidine + ATP = 5-amino-1-(5-phospho-beta-D-ribosyl)imidazole + ADP + phosphate + H(+). Its pathway is purine metabolism; IMP biosynthesis via de novo pathway; 5-amino-1-(5-phospho-D-ribosyl)imidazole from N(2)-formyl-N(1)-(5-phospho-D-ribosyl)glycinamide: step 2/2. The protein is Phosphoribosylformylglycinamidine cyclo-ligase of Hamiltonella defensa subsp. Acyrthosiphon pisum (strain 5AT).